Reading from the N-terminus, the 641-residue chain is Glycerol metabolism operon regulatory protein (641 aa).

A sensor domain region spans residues 1-318 (MTTHTQDIGK…MRQLMTSQLG (318 aa)). The GAF domain maps to 52-189 (ALLTIAQAAL…AIAREVGNSL (138 aa)). The PAS domain occupies 203–265 (NQMYGLLESM…MLLRRAIKHA (63 aa)). The region spanning 327 to 552 (MSTDDPETRR…LNSIIENIAI (226 aa)) is the Sigma-54 factor interaction domain. Residues 355-362 (GEEGVGKE) and 415-424 (ANGGTLFLEK) contribute to the ATP site.

Its function is as follows. Transcriptional activator of the glycerol utilization dha operon. This is Glycerol metabolism operon regulatory protein from Citrobacter freundii.